Consider the following 254-residue polypeptide: Phosphatidylglycerol--prolipoprotein diacylglyceryl transferase (254 aa).

The next 4 helical transmembrane spans lie at 11-31, 49-69, 84-104, and 109-129; these read LAIR…LLLA, FLIA…IFEF, QGGL…YIYL, and ESFF…QAIG. Residue R130 coordinates a 1,2-diacyl-sn-glycero-3-phospho-(1'-sn-glycerol). Helical transmembrane passes span 169–189, 196–216, and 228–248; these read PTFL…VYLL, GIVF…IEGL, and VAQL…YNII.

The protein belongs to the Lgt family.

It is found in the cell membrane. It carries out the reaction L-cysteinyl-[prolipoprotein] + a 1,2-diacyl-sn-glycero-3-phospho-(1'-sn-glycerol) = an S-1,2-diacyl-sn-glyceryl-L-cysteinyl-[prolipoprotein] + sn-glycerol 1-phosphate + H(+). It participates in protein modification; lipoprotein biosynthesis (diacylglyceryl transfer). Its function is as follows. Catalyzes the transfer of the diacylglyceryl group from phosphatidylglycerol to the sulfhydryl group of the N-terminal cysteine of a prolipoprotein, the first step in the formation of mature lipoproteins. This is Phosphatidylglycerol--prolipoprotein diacylglyceryl transferase from Clostridium botulinum (strain Langeland / NCTC 10281 / Type F).